The following is a 420-amino-acid chain: Probable serine hydroxymethyltransferase (420 aa).

Residues L121 and 125–127 (GHL) each bind (6S)-5,6,7,8-tetrahydrofolate. K230 carries the N6-(pyridoxal phosphate)lysine modification. Residues E246 and 354 to 356 (SPF) contribute to the (6S)-5,6,7,8-tetrahydrofolate site.

The protein belongs to the SHMT family. Homodimer. Requires pyridoxal 5'-phosphate as cofactor.

It is found in the cytoplasm. It carries out the reaction (6R)-5,10-methylene-5,6,7,8-tetrahydrofolate + glycine + H2O = (6S)-5,6,7,8-tetrahydrofolate + L-serine. It participates in one-carbon metabolism; tetrahydrofolate interconversion. Catalyzes the reversible interconversion of serine and glycine with tetrahydrofolate (THF) serving as the one-carbon carrier. This reaction serves as the major source of one-carbon groups required for the biosynthesis of purines, thymidylate, methionine, and other important biomolecules. The chain is Probable serine hydroxymethyltransferase from Rickettsia bellii (strain RML369-C).